A 255-amino-acid polypeptide reads, in one-letter code: NAD kinase (255 aa).

Catalysis depends on Asp-44, which acts as the Proton acceptor. Residues 44 to 45 (DG), 114 to 115 (NE), Asp-144, Ala-152, and 155 to 160 (TAYNLS) each bind NAD(+).

Belongs to the NAD kinase family. A divalent metal cation serves as cofactor.

Its subcellular location is the cytoplasm. It catalyses the reaction NAD(+) + ATP = ADP + NADP(+) + H(+). Involved in the regulation of the intracellular balance of NAD and NADP, and is a key enzyme in the biosynthesis of NADP. Catalyzes specifically the phosphorylation on 2'-hydroxyl of the adenosine moiety of NAD to yield NADP. The polypeptide is NAD kinase (Hyphomonas neptunium (strain ATCC 15444)).